Reading from the N-terminus, the 602-residue chain is Putative pentatricopeptide repeat-containing protein At1g12700, mitochondrial (602 aa).

The N-terminal 95 residues, 1–95 (MMIKRSITTN…PSLVDFSRFF (95 aa)), are a transit peptide targeting the mitochondrion. 14 PPR repeats span residues 87-121 (SLVDFSRFFSAIARTKQFNLVLDFCKQLELNGIAH), 122-156 (NIYTLNIMINCFCRCCKTCFAYSVLGKVMKLGYEP), 157-191 (DTTTFNTLIKGLFLEGKVSEAVVLVDRMVENGCQP), 192-226 (DVVTYNSIVNGICRSGDTSLALDLLRKMEERNVKA), 227-261 (DVFTYSTIIDSLCRDGCIDAAISLFKEMETKGIKS), 262-296 (SVVTYNSLVRGLCKAGKWNDGALLLKDMVSREIVP), 297-331 (NVITFNVLLDVFVKEGKLQEANELYKEMITRGISP), 332-366 (NIITYNTLMDGYCMQNRLSEANNMLDLMVRNKCSP), 367-401 (DIVTFTSLIKGYCMVKRVDDGMKVFRNISKRGLVA), 402-436 (NAVTYSILVQGFCQSGKIKLAEELFQEMVSHGVLP), 437-471 (DVMTYGILLDGLCDNGKLEKALEIFEDLQKSKMDL), 472-506 (GIVMYTTIIEGMCKGGKVEDAWNLFCSLPCKGVKP), 507-541 (NVMTYTVMISGLCKKGSLSEANILLRKMEEDGNAP), and 542-576 (NDCTYNTLIRAHLRDGDLTASAKLIEEMKSCGFSA).

The protein belongs to the PPR family. P subfamily.

The protein localises to the mitochondrion. The protein is Putative pentatricopeptide repeat-containing protein At1g12700, mitochondrial of Arabidopsis thaliana (Mouse-ear cress).